Consider the following 492-residue polypeptide: Cytochrome P450 2A2 (492 aa).

A heme-binding site is contributed by Cys-437.

Belongs to the cytochrome P450 family. Heme is required as a cofactor. As to expression, liver specific.

It localises to the endoplasmic reticulum membrane. The protein localises to the microsome membrane. It carries out the reaction an organic molecule + reduced [NADPH--hemoprotein reductase] + O2 = an alcohol + oxidized [NADPH--hemoprotein reductase] + H2O + H(+). In terms of biological role, highly active in the 15-alpha-hydroxylation of testosterone. The chain is Cytochrome P450 2A2 (Cyp2a2) from Rattus norvegicus (Rat).